We begin with the raw amino-acid sequence, 113 residues long: MSMAEYKGKVKNIQDTPFGYTLSLIGGKWKMVIIYLLAEDQPIRFKELKRQIGTITYKTLSSQLKELEADGLVKRKEYPQVPPKVEYSLTDKAGTLLPILEELCEWGVKNQNN.

Positions 16–113 constitute an HTH hxlR-type domain; sequence TPFGYTLSLI…CEWGVKNQNN (98 aa).

This is an uncharacterized protein from Halalkalibacterium halodurans (strain ATCC BAA-125 / DSM 18197 / FERM 7344 / JCM 9153 / C-125) (Bacillus halodurans).